Reading from the N-terminus, the 367-residue chain is (E)-2-epi-beta-caryophyllene synthase (367 aa).

Mg(2+) is bound by residues Asp-93, Asn-234, and Ser-238. The DDXXE motif motif lies at 93–97 (DDIAE).

It belongs to the terpene synthase family. The cofactor is Mg(2+). It depends on Mn(2+) as a cofactor.

The enzyme catalyses (2E,6E)-farnesyl diphosphate = (E)-2-epi-beta-caryophyllene + diphosphate. It participates in secondary metabolite biosynthesis; terpenoid biosynthesis. Sesquiterpene synthase converting farnesyl diphosphate to (E)-2-epi-beta-caryophyllene as the major product, and to two other unidentified sesquiterpenes. Has no diterpene synthase activity. The polypeptide is (E)-2-epi-beta-caryophyllene synthase (Selaginella moellendorffii (Spikemoss)).